We begin with the raw amino-acid sequence, 351 residues long: Methylthioribose-1-phosphate isomerase (351 aa).

Substrate is bound by residues 51–53, Arg-94, and Gln-199; that span reads RGA. Catalysis depends on Asp-240, which acts as the Proton donor. 250-251 contributes to the substrate binding site; it reads NK.

Belongs to the EIF-2B alpha/beta/delta subunits family. MtnA subfamily. As to quaternary structure, homodimer.

It catalyses the reaction 5-(methylsulfanyl)-alpha-D-ribose 1-phosphate = 5-(methylsulfanyl)-D-ribulose 1-phosphate. The protein operates within amino-acid biosynthesis; L-methionine biosynthesis via salvage pathway; L-methionine from S-methyl-5-thio-alpha-D-ribose 1-phosphate: step 1/6. Its function is as follows. Catalyzes the interconversion of methylthioribose-1-phosphate (MTR-1-P) into methylthioribulose-1-phosphate (MTRu-1-P). In Bacillus anthracis, this protein is Methylthioribose-1-phosphate isomerase.